Here is a 107-residue protein sequence, read N- to C-terminus: MFGLFIITAIAEILGCYFPYLILKEGKSAWLWLPTALSLAVFVWLLTLHPAASGRIYAAYGGIYIFTALMWLRFVDQVALTRWDILGGVIVLCGAGLIILQPQGLIR.

Transmembrane regions (helical) follow at residues 2 to 22, 28 to 48, 56 to 76, and 85 to 105; these read FGLFIITAIAEILGCYFPYLI, SAWLWLPTALSLAVFVWLLTL, IYAAYGGIYIFTALMWLRFVD, and ILGGVIVLCGAGLIILQPQGL.

Belongs to the UPF0060 family.

The protein localises to the cell inner membrane. The chain is UPF0060 membrane protein A1S_1909 from Acinetobacter baumannii (strain ATCC 17978 / DSM 105126 / CIP 53.77 / LMG 1025 / NCDC KC755 / 5377).